A 324-amino-acid polypeptide reads, in one-letter code: Aldo-keto reductase family 1 member A1 (324 aa).

Phosphoserine is present on Ser-3. NADP(+) is bound by residues Gly-10–Gly-19, Thr-20, and Trp-21. Residue Ser-37 is modified to Phosphoserine. Position 44 (Asp-44) interacts with NADP(+). Residue Tyr-49 is the Proton donor of the active site. Lys-126 is modified (N6-acetyllysine; alternate). Residue Lys-126 is modified to N6-succinyllysine; alternate. Residue Lys-144 is modified to N6-succinyllysine. Positions 161, 162, 210, 212, 214, 215, 262, 263, 264, 265, 268, 271, and 272 each coordinate NADP(+). Ser-210 bears the Phosphoserine mark.

The protein belongs to the aldo/keto reductase family.

It localises to the cytoplasm. Its subcellular location is the cytosol. The protein localises to the apical cell membrane. The catalysed reaction is a primary alcohol + NADP(+) = an aldehyde + NADPH + H(+). It catalyses the reaction L-gulonate + NADP(+) = aldehydo-D-glucuronate + NADPH + H(+). It carries out the reaction L-gulono-1,4-lactone + NADP(+) = D-glucurono-3,6-lactone + NADPH + H(+). The enzyme catalyses allyl alcohol + NADP(+) = acrolein + NADPH + H(+). The catalysed reaction is glycerol + NADP(+) = D-glyceraldehyde + NADPH + H(+). It catalyses the reaction glycerol + NADP(+) = L-glyceraldehyde + NADPH + H(+). It carries out the reaction hydroxyacetone + NADP(+) = methylglyoxal + NADPH + H(+). The enzyme catalyses 3-deoxyfructose + NADP(+) = 3-deoxyglucosone + NADPH + H(+). The catalysed reaction is (R)-mevalonate + NADP(+) = (R)-mevaldate + NADPH + H(+). It catalyses the reaction S-nitroso-CoA + NADPH + H(+) = sulfinamide-CoA + NADP(+). It carries out the reaction S-nitrosoglutathione + NADPH + H(+) = S-(hydroxysulfenamide)glutathione + NADP(+). Catalyzes the NADPH-dependent reduction of a wide variety of carbonyl-containing compounds to their corresponding alcohols. Displays enzymatic activity towards endogenous metabolites such as aromatic and aliphatic aldehydes, ketones, monosaccharides and bile acids, with a preference for negatively charged substrates, such as glucuronate and succinic semialdehyde. Plays an important role by catalyzing the reduction of D-glucuronic acid and D-glucurono-gamma-lactone. Functions as a detoxifiying enzyme by reducing a range of toxic aldehydes. Reduces methylglyoxal and 3-deoxyglucosone, which are present at elevated levels under hyperglycemic conditions and are cytotoxic. Involved also in the detoxification of lipid-derived aldehydes like acrolein. Plays a role in the activation of procarcinogens, such as polycyclic aromatic hydrocarbon trans-dihydrodiols, and in the metabolism of various xenobiotics and drugs. Also acts as an inhibitor of protein S-nitrosylation by mediating degradation of S-nitroso-coenzyme A (S-nitroso-CoA), a cofactor required to S-nitrosylate proteins. S-nitroso-CoA reductase activity is involved in reprogramming intermediary metabolism in renal proximal tubules, notably by inhibiting protein S-nitrosylation of isoform 2 of PKM (PKM2). Also acts as a S-nitroso-glutathione reductase by catalyzing the NADPH-dependent reduction of S-nitrosoglutathione. Displays no reductase activity towards retinoids. This chain is Aldo-keto reductase family 1 member A1 (AKR1A1), found in Cricetulus griseus (Chinese hamster).